Reading from the N-terminus, the 169-residue chain is Thaumatin-like pathogenesis-related protein 4 (169 aa).

The N-terminal stretch at 1–21 (MATSSTVLFLLLAVFAASASA) is a signal peptide.

The protein belongs to the thaumatin family.

Its function is as follows. Associated with resistance against stem rust fungi. The chain is Thaumatin-like pathogenesis-related protein 4 (RASTL-4) from Avena sativa (Oat).